We begin with the raw amino-acid sequence, 187 residues long: Ribosome-recycling factor (187 aa).

The protein belongs to the RRF family.

It is found in the cytoplasm. Its function is as follows. Responsible for the release of ribosomes from messenger RNA at the termination of protein biosynthesis. May increase the efficiency of translation by recycling ribosomes from one round of translation to another. This is Ribosome-recycling factor from Methylorubrum extorquens (strain CM4 / NCIMB 13688) (Methylobacterium extorquens).